The chain runs to 659 residues: Protein phosphatase Slingshot homolog 3 (659 aa).

The span at 1–16 (MALVTVSRSPPGSGAS) shows a compositional bias: polar residues. The tract at residues 1–31 (MALVTVSRSPPGSGASTPVGPWDQAVQRRSR) is disordered. At Ala-2 the chain carries N-acetylalanine. Residues Ser-9 and Ser-37 each carry the phosphoserine modification. Positions 46–96 (LGLQDGGDNDDAAEASSEPTEKAPSEEELHGDQTDFGQGSQSPQKQEEQRQ) are disordered. The span at 64-78 (PTEKAPSEEELHGDQ) shows a compositional bias: basic and acidic residues. A compositionally biased stretch (polar residues) spans 80-89 (DFGQGSQSPQ). Residues Ser-85 and Ser-87 each carry the phosphoserine modification. The 56-residue stretch at 269–324 (EQMEQAIRAELWKVLDVSDLESVTSKEIRQALELRLGLPLQQYRDFIDNQMLLLVA) folds into the DEK-C domain. A Tyrosine-protein phosphatase domain is found at 328-469 (RASRIFPHLY…LQIYQGILTA (142 aa)). Cys-413 serves as the catalytic Phosphocysteine intermediate. 3 disordered regions span residues 482 to 534 (GVSP…RINL), 547 to 603 (SLEL…RQSV), and 617 to 638 (QAFQ…ISST). Residues 547–557 (SLELESTSETS) are compositionally biased toward low complexity.

Belongs to the protein-tyrosine phosphatase family. As to quaternary structure, does not bind to, or colocalize with, filamentous actin.

It is found in the cytoplasm. The protein resides in the cytoskeleton. The protein localises to the nucleus. The enzyme catalyses O-phospho-L-tyrosyl-[protein] + H2O = L-tyrosyl-[protein] + phosphate. It carries out the reaction O-phospho-L-seryl-[protein] + H2O = L-seryl-[protein] + phosphate. It catalyses the reaction O-phospho-L-threonyl-[protein] + H2O = L-threonyl-[protein] + phosphate. Protein phosphatase which may play a role in the regulation of actin filament dynamics. Can dephosphorylate and activate the actin binding/depolymerizing factor cofilin, which subsequently binds to actin filaments and stimulates their disassembly. The chain is Protein phosphatase Slingshot homolog 3 (SSH3) from Homo sapiens (Human).